A 366-amino-acid polypeptide reads, in one-letter code: cAMP-dependent protein kinase regulatory subunit (366 aa).

A dimerization and phosphorylation region spans residues 1–121 (MSGGNEEDQL…SLESAMRKNL (121 aa)). Residues 55–87 (QRAQEGGNPDAADDDDIIVEPPKRSGGRRTGIS) are disordered. The Pseudophosphorylation motif motif lies at 82–86 (RRTGI). Ser87 carries the post-translational modification Phosphoserine. Residues 122 to 239 (LFAH…SKVQ), Glu187, Arg196, 240 to 366 (ILAD…KLMT), Glu311, and Arg320 each bind 3',5'-cyclic AMP.

This sequence belongs to the cAMP-dependent kinase regulatory chain family. Tetramer, composed of 2 regulatory (R) and 2 catalytic (C) subunits. In the presence of cAMP it dissociates into 2 active monomeric C subunits and an R dimer that binds four cAMP molecules. In terms of processing, the pseudophosphorylation site binds to the substrate-binding region of the catalytic chain but is not phosphorylated. The physiological significance of phosphorylations by other kinases is unclear.

It localises to the cytoplasm. It is found in the cytosol. Controls the rhythmic contraction of enteric muscles probably by regulating G-protein coupled receptor aex-2-mediated calcium influx in GABAergic DVB neurons. The protein is cAMP-dependent protein kinase regulatory subunit (kin-2) of Caenorhabditis elegans.